We begin with the raw amino-acid sequence, 317 residues long: MERMLFLSPPSLAAHPEKLSTILSAHAQYSTELQMLDRLAAGLVSLPESTYDIVMFLIDADCLKTGSTPRMSRGVIESIVRALRPGGKLKSEHGLFASPDYPDRTELVLAGLVFDDNGDLVKPNFGAQDTVPLKLGKKKKATPAASSGDGAEANGVTVNMPIATDSKRNGQGAAVQGLGFVDFSDDLDLPPEDDDELIDEEALMDEEDMGRPIVQPPECRPKAGKRRRACKDCTCGLAERLHEEDTAKRANADAALETLKLGSNDLAEVDFTVQGKMGSCGNCALGDAFRCDGCPYIGLPPFKPGEEVRLLSNDVQL.

The segment at 1 to 131 is N-terminal SAM-like domain; sequence MERMLFLSPP…KPNFGAQDTV (131 aa). The interval 132–209 is linker; that stretch reads PLKLGKKKKA…EEALMDEEDM (78 aa). 4 residues coordinate [2Fe-2S] cluster: C219, C230, C233, and C235. The segment at 219–235 is fe-S binding site A; that stretch reads CRPKAGKRRRACKDCTC. 4 residues coordinate [4Fe-4S] cluster: C280, C283, C291, and C294. 2 consecutive short sequence motifs (cx2C motif) follow at residues 280-283 and 291-294; these read CGNC and CDGC. The tract at residues 280 to 294 is fe-S binding site B; sequence CGNCALGDAFRCDGC.

This sequence belongs to the anamorsin family. In terms of assembly, monomer. Interacts with TAH18. Interacts with MIA40. Requires [2Fe-2S] cluster as cofactor. [4Fe-4S] cluster serves as cofactor.

The protein resides in the cytoplasm. It is found in the mitochondrion intermembrane space. Its function is as follows. Component of the cytosolic iron-sulfur (Fe-S) protein assembly (CIA) machinery required for the maturation of extramitochondrial Fe-S proteins. Part of an electron transfer chain functioning in an early step of cytosolic Fe-S biogenesis, facilitating the de novo assembly of a [4Fe-4S] cluster on the scaffold complex CFD1-NBP35. Electrons are transferred to DRE2 from NADPH via the FAD- and FMN-containing protein TAH18. TAH18-DRE2 are also required for the assembly of the diferric tyrosyl radical cofactor of ribonucleotide reductase (RNR), probably by providing electrons for reduction during radical cofactor maturation in the catalytic small subunit RNR2. This is Fe-S cluster assembly protein DRE2 from Uncinocarpus reesii (strain UAMH 1704).